We begin with the raw amino-acid sequence, 838 residues long: DNA gyrase subunit A (838 aa).

One can recognise a Topo IIA-type catalytic domain in the interval 41–510 (LPEVRDGLKP…ADGDVSDEDL (470 aa)). Catalysis depends on Tyr-129, which acts as the O-(5'-phospho-DNA)-tyrosine intermediate. A GyrA-box motif is present at residues 537–543 (QKRGGKG).

This sequence belongs to the type II topoisomerase GyrA/ParC subunit family. Heterotetramer, composed of two GyrA and two GyrB chains. In the heterotetramer, GyrA contains the active site tyrosine that forms a transient covalent intermediate with DNA, while GyrB binds cofactors and catalyzes ATP hydrolysis.

The protein resides in the cytoplasm. The enzyme catalyses ATP-dependent breakage, passage and rejoining of double-stranded DNA.. A type II topoisomerase that negatively supercoils closed circular double-stranded (ds) DNA in an ATP-dependent manner to modulate DNA topology and maintain chromosomes in an underwound state. Negative supercoiling favors strand separation, and DNA replication, transcription, recombination and repair, all of which involve strand separation. Also able to catalyze the interconversion of other topological isomers of dsDNA rings, including catenanes and knotted rings. Type II topoisomerases break and join 2 DNA strands simultaneously in an ATP-dependent manner. The protein is DNA gyrase subunit A of Mycobacterium tuberculosis (strain CDC 1551 / Oshkosh).